A 149-amino-acid polypeptide reads, in one-letter code: uncharacterized protein (149 aa).

It to B.subtilis XkdN.

This is an uncharacterized protein from Bacillus subtilis (strain 168).